The sequence spans 585 residues: 2-succinyl-5-enolpyruvyl-6-hydroxy-3-cyclohexene-1-carboxylate synthase (585 aa).

It belongs to the TPP enzyme family. MenD subfamily. Homodimer. It depends on Mg(2+) as a cofactor. The cofactor is Mn(2+). Thiamine diphosphate serves as cofactor.

The catalysed reaction is isochorismate + 2-oxoglutarate + H(+) = 5-enolpyruvoyl-6-hydroxy-2-succinyl-cyclohex-3-ene-1-carboxylate + CO2. Its pathway is quinol/quinone metabolism; 1,4-dihydroxy-2-naphthoate biosynthesis; 1,4-dihydroxy-2-naphthoate from chorismate: step 2/7. It participates in cofactor biosynthesis; phylloquinone biosynthesis. Catalyzes the thiamine diphosphate-dependent decarboxylation of 2-oxoglutarate and the subsequent addition of the resulting succinic semialdehyde-thiamine pyrophosphate anion to isochorismate to yield 2-succinyl-5-enolpyruvyl-6-hydroxy-3-cyclohexene-1-carboxylate (SEPHCHC). This Crocosphaera subtropica (strain ATCC 51142 / BH68) (Cyanothece sp. (strain ATCC 51142)) protein is 2-succinyl-5-enolpyruvyl-6-hydroxy-3-cyclohexene-1-carboxylate synthase.